The primary structure comprises 511 residues: Xylose import ATP-binding protein XylG (511 aa).

2 ABC transporter domains span residues 6–244 and 261–506; these read LEMR…VGRE and FEAR…IGKP. 38 to 45 is an ATP binding site; that stretch reads GENGAGKS.

The protein belongs to the ABC transporter superfamily. Xylose importer (TC 3.A.1.2.4) family. In terms of assembly, the complex is composed of two ATP-binding proteins (XylG), two transmembrane proteins (XylH) and a solute-binding protein (XylF).

The protein resides in the cell inner membrane. The catalysed reaction is D-xylose(out) + ATP + H2O = D-xylose(in) + ADP + phosphate + H(+). Its function is as follows. Part of the ABC transporter complex XylFGH involved in xylose import. Responsible for energy coupling to the transport system. This is Xylose import ATP-binding protein XylG from Brucella abortus (strain 2308).